The primary structure comprises 158 residues: MITVPHSRKVELDEIDRAILRLLQEDGRMSYSEISRRINVPESTVRARVNRLVKEGVIRKFAALINPFKAGYEIVAFIAVDAEPAKVKQVVEELAKFPEVDVLGIVTGAHDIFMQVTVKDLQELERFILEKMAKIDGIKSTETSILTSVKKWGYARVF.

The 62-residue stretch at 12 to 73 (LDEIDRAILR…LINPFKAGYE (62 aa)) folds into the HTH asnC-type domain. Positions 31–50 (YSEISRRINVPESTVRARVN) form a DNA-binding region, H-T-H motif.

This is an uncharacterized protein from Pyrococcus horikoshii (strain ATCC 700860 / DSM 12428 / JCM 9974 / NBRC 100139 / OT-3).